We begin with the raw amino-acid sequence, 169 residues long: E1B protein, small T-antigen (169 aa).

This sequence belongs to the adenoviridae E1B 19 kDa protein family.

This is E1B protein, small T-antigen from Canis lupus familiaris (Dog).